The sequence spans 348 residues: Small ribosomal subunit biogenesis GTPase RsgA (348 aa).

A CP-type G domain is found at 72-230 (RNQLSRPAIA…IADTPGFNQP (159 aa)). Residues 121–124 (TKAD) and 172–180 (GPSGVGKSS) each bind GTP. Cys255, Cys260, His262, and Cys268 together coordinate Zn(2+). The span at 305 to 322 (AKSDRQGQQRLEPLLDAK) shows a compositional bias: basic and acidic residues. Residues 305 to 348 (AKSDRQGQQRLEPLLDAKKYRRRSRRQQHQHVNPMAEEVLDSEW) are disordered. The span at 323-333 (KYRRRSRRQQH) shows a compositional bias: basic residues.

It belongs to the TRAFAC class YlqF/YawG GTPase family. RsgA subfamily. In terms of assembly, monomer. Associates with 30S ribosomal subunit, binds 16S rRNA. Zn(2+) serves as cofactor.

It localises to the cytoplasm. Its function is as follows. One of several proteins that assist in the late maturation steps of the functional core of the 30S ribosomal subunit. Helps release RbfA from mature subunits. May play a role in the assembly of ribosomal proteins into the subunit. Circularly permuted GTPase that catalyzes slow GTP hydrolysis, GTPase activity is stimulated by the 30S ribosomal subunit. This chain is Small ribosomal subunit biogenesis GTPase RsgA, found in Thermosynechococcus vestitus (strain NIES-2133 / IAM M-273 / BP-1).